Reading from the N-terminus, the 439-residue chain is tRNA modification GTPase MnmE (439 aa).

Arginine 24, glutamate 81, and lysine 121 together coordinate (6S)-5-formyl-5,6,7,8-tetrahydrofolate. The TrmE-type G domain occupies 218–363; sequence GFKVVIAGAP…LRRLIGDIVE (146 aa). Asparagine 228 serves as a coordination point for K(+). GTP-binding positions include 228 to 233, 247 to 253, and 272 to 275; these read NAGKSS, TEIAGTT, and DTAG. Mg(2+) is bound at residue serine 232. K(+)-binding residues include threonine 247, isoleucine 249, and threonine 252. Threonine 253 contributes to the Mg(2+) binding site. (6S)-5-formyl-5,6,7,8-tetrahydrofolate is bound at residue lysine 439.

The protein belongs to the TRAFAC class TrmE-Era-EngA-EngB-Septin-like GTPase superfamily. TrmE GTPase family. Homodimer. Heterotetramer of two MnmE and two MnmG subunits. Requires K(+) as cofactor.

It is found in the cytoplasm. In terms of biological role, exhibits a very high intrinsic GTPase hydrolysis rate. Involved in the addition of a carboxymethylaminomethyl (cmnm) group at the wobble position (U34) of certain tRNAs, forming tRNA-cmnm(5)s(2)U34. This Rhizobium johnstonii (strain DSM 114642 / LMG 32736 / 3841) (Rhizobium leguminosarum bv. viciae) protein is tRNA modification GTPase MnmE.